The following is a 149-amino-acid chain: Large ribosomal subunit protein bL9 (149 aa).

The protein belongs to the bacterial ribosomal protein bL9 family.

Functionally, binds to the 23S rRNA. The chain is Large ribosomal subunit protein bL9 from Leptospira interrogans serogroup Icterohaemorrhagiae serovar copenhageni (strain Fiocruz L1-130).